A 209-amino-acid polypeptide reads, in one-letter code: Uridine kinase (209 aa).

ATP is bound at residue 12-19 (GGSGGGKT).

The protein belongs to the uridine kinase family.

It is found in the cytoplasm. It catalyses the reaction uridine + ATP = UMP + ADP + H(+). The enzyme catalyses cytidine + ATP = CMP + ADP + H(+). Its pathway is pyrimidine metabolism; CTP biosynthesis via salvage pathway; CTP from cytidine: step 1/3. It functions in the pathway pyrimidine metabolism; UMP biosynthesis via salvage pathway; UMP from uridine: step 1/1. The protein is Uridine kinase of Streptococcus agalactiae serotype V (strain ATCC BAA-611 / 2603 V/R).